The primary structure comprises 67 residues: Pepsin B (67 aa).

A propeptide spans 1–43 (MERIILRKGKSIREAMEEQGVLEKFLKNRPKIDPAAKYHFNND) (activation peptide).

It belongs to the peptidase A1 family.

It is found in the secreted. The enzyme catalyses Degradation of gelatin, little activity on hemoglobin. Specificity on B chain of insulin more restricted than that of pepsin A. Does not cleave 1-Phe-|-Val-2, 4-Gln-|-His-5 or 23-Gly-|-Phe-24.. The polypeptide is Pepsin B (PGB) (Sus scrofa (Pig)).